The following is a 359-amino-acid chain: Norspermidine sensor (359 aa).

An N-terminal signal peptide occupies residues 1 to 33 (MTNFCNEWVSYSQMIKRFLSLMVLNTVCYQASA).

The protein belongs to the bacterial solute-binding protein PotD/PotF family.

The protein resides in the periplasm. Acts as a sensor of norspermidine and enhances biofilm formation. When complexed to norspermidine, could interact with the periplasmic portion of MbaA to regulate its enzymatic activity. This Vibrio cholerae serotype O1 (strain ATCC 39315 / El Tor Inaba N16961) protein is Norspermidine sensor (nspS).